Here is a 440-residue protein sequence, read N- to C-terminus: NADH-quinone oxidoreductase subunit D 2 (440 aa).

Belongs to the complex I 49 kDa subunit family. NDH-1 is composed of 14 different subunits. Subunits NuoB, C, D, E, F, and G constitute the peripheral sector of the complex.

The protein resides in the cell membrane. The enzyme catalyses a quinone + NADH + 5 H(+)(in) = a quinol + NAD(+) + 4 H(+)(out). Its function is as follows. NDH-1 shuttles electrons from NADH, via FMN and iron-sulfur (Fe-S) centers, to quinones in the respiratory chain. The immediate electron acceptor for the enzyme in this species is believed to be a menaquinone. Couples the redox reaction to proton translocation (for every two electrons transferred, four hydrogen ions are translocated across the cytoplasmic membrane), and thus conserves the redox energy in a proton gradient. The polypeptide is NADH-quinone oxidoreductase subunit D 2 (Streptomyces coelicolor (strain ATCC BAA-471 / A3(2) / M145)).